Here is a 295-residue protein sequence, read N- to C-terminus: Pyridoxal 5'-phosphate synthase subunit PdxS (295 aa).

A D-ribose 5-phosphate-binding site is contributed by D25. Catalysis depends on K82, which acts as the Schiff-base intermediate with D-ribose 5-phosphate. G154 contacts D-ribose 5-phosphate. R166 is a binding site for D-glyceraldehyde 3-phosphate. Residues G215 and 236–237 (GS) each bind D-ribose 5-phosphate.

The protein belongs to the PdxS/SNZ family. In terms of assembly, in the presence of PdxT, forms a dodecamer of heterodimers.

The catalysed reaction is aldehydo-D-ribose 5-phosphate + D-glyceraldehyde 3-phosphate + L-glutamine = pyridoxal 5'-phosphate + L-glutamate + phosphate + 3 H2O + H(+). It participates in cofactor biosynthesis; pyridoxal 5'-phosphate biosynthesis. Catalyzes the formation of pyridoxal 5'-phosphate from ribose 5-phosphate (RBP), glyceraldehyde 3-phosphate (G3P) and ammonia. The ammonia is provided by the PdxT subunit. Can also use ribulose 5-phosphate and dihydroxyacetone phosphate as substrates, resulting from enzyme-catalyzed isomerization of RBP and G3P, respectively. The chain is Pyridoxal 5'-phosphate synthase subunit PdxS from Oceanobacillus iheyensis (strain DSM 14371 / CIP 107618 / JCM 11309 / KCTC 3954 / HTE831).